We begin with the raw amino-acid sequence, 1015 residues long: Probable beta-galactosidase B (1015 aa).

An N-terminal signal peptide occupies residues Met-1–Ala-20. A glycan (N-linked (GlcNAc...) asparagine) is linked at Asn-23. Tyr-90 is a binding site for substrate. N-linked (GlcNAc...) asparagine glycans are attached at residues Asn-99 and Asn-100. Asn-135, Ala-136, and Glu-137 together coordinate substrate. The N-linked (GlcNAc...) asparagine glycan is linked to Asn-172. Residue Asn-195 participates in substrate binding. Glu-196 acts as the Proton donor in catalysis. N-linked (GlcNAc...) asparagine glycosylation occurs at Asn-211. Residue Tyr-265 participates in substrate binding. Cys-271 and Cys-324 form a disulfide bridge. Glu-308 serves as the catalytic Nucleophile. Position 373 (Tyr-373) interacts with substrate. N-linked (GlcNAc...) asparagine glycosylation is found at Asn-411, Asn-456, Asn-554, Asn-679, Asn-735, Asn-775, and Asn-821.

It belongs to the glycosyl hydrolase 35 family.

The protein resides in the secreted. It carries out the reaction Hydrolysis of terminal non-reducing beta-D-galactose residues in beta-D-galactosides.. In terms of biological role, cleaves beta-linked terminal galactosyl residues from gangliosides, glycoproteins, and glycosaminoglycans. The sequence is that of Probable beta-galactosidase B (lacB) from Aspergillus fumigatus (strain CBS 144.89 / FGSC A1163 / CEA10) (Neosartorya fumigata).